Consider the following 137-residue polypeptide: Fluoride-specific ion channel FluC 4 (137 aa).

4 helical membrane-spanning segments follow: residues 20-40 (AAIG…ILGA), 43-63 (LWGT…FATL), 83-103 (GLCG…LLVL), and 110-130 (ALAY…LGLI). Gly86 and Thr89 together coordinate Na(+).

The protein belongs to the fluoride channel Fluc/FEX (TC 1.A.43) family.

The protein resides in the cell inner membrane. The enzyme catalyses fluoride(in) = fluoride(out). With respect to regulation, na(+) is not transported, but it plays an essential structural role and its presence is essential for fluoride channel function. Fluoride-specific ion channel. Important for reducing fluoride concentration in the cell, thus reducing its toxicity. The protein is Fluoride-specific ion channel FluC 4 of Brucella suis biovar 1 (strain 1330).